A 555-amino-acid polypeptide reads, in one-letter code: Glucose-6-phosphate isomerase (555 aa).

The Proton donor role is filled by E356. Catalysis depends on residues H387 and K515.

Belongs to the GPI family.

The protein resides in the cytoplasm. The catalysed reaction is alpha-D-glucose 6-phosphate = beta-D-fructose 6-phosphate. The protein operates within carbohydrate biosynthesis; gluconeogenesis. Its pathway is carbohydrate degradation; glycolysis; D-glyceraldehyde 3-phosphate and glycerone phosphate from D-glucose: step 2/4. Catalyzes the reversible isomerization of glucose-6-phosphate to fructose-6-phosphate. In Desulforapulum autotrophicum (strain ATCC 43914 / DSM 3382 / VKM B-1955 / HRM2) (Desulfobacterium autotrophicum), this protein is Glucose-6-phosphate isomerase.